Consider the following 84-residue polypeptide: Sec-independent protein translocase protein TatA (84 aa).

A helical transmembrane segment spans residues 4–24 (MSPVHWLILAVVLLVVFGGGG). The interval 46–84 (DDESMTATDATQAPGHISPPNQNPGYSQTTSSETHRNQV) is disordered. Positions 64 to 77 (PPNQNPGYSQTTSS) are enriched in polar residues.

This sequence belongs to the TatA/E family. The Tat system comprises two distinct complexes: a TatABC complex, containing multiple copies of TatA, TatB and TatC subunits, and a separate TatA complex, containing only TatA subunits. Substrates initially bind to the TatABC complex, which probably triggers association of the separate TatA complex to form the active translocon.

The protein resides in the cell inner membrane. Functionally, part of the twin-arginine translocation (Tat) system that transports large folded proteins containing a characteristic twin-arginine motif in their signal peptide across membranes. TatA could form the protein-conducting channel of the Tat system. The chain is Sec-independent protein translocase protein TatA from Gluconobacter oxydans (strain 621H) (Gluconobacter suboxydans).